We begin with the raw amino-acid sequence, 164 residues long: Replication restart protein DnaT (164 aa).

This sequence belongs to the DnaT family. In terms of assembly, homooligomerizes. Interacts with PriB. Component of the replication restart primosome. Primosome assembly occurs via a 'hand-off' mechanism. PriA binds to replication forks, subsequently PriB then DnaT bind; DnaT then displaces ssDNA to generate the helicase loading substrate.

Its function is as follows. Involved in the restart of stalled replication forks, which reloads the replicative helicase on sites other than the origin of replication. Can function in multiple replication restart pathways. Displaces ssDNA from a PriB-ssDNA complex. Probably forms a spiral filament on ssDNA. This is Replication restart protein DnaT from Buchnera aphidicola subsp. Acyrthosiphon pisum (strain 5A).